Consider the following 231-residue polypeptide: 7-cyano-7-deazaguanine synthase (231 aa).

Position 8-18 (F8–L18) interacts with ATP. C188, C197, C200, and C203 together coordinate Zn(2+).

The protein belongs to the QueC family. The cofactor is Zn(2+).

It catalyses the reaction 7-carboxy-7-deazaguanine + NH4(+) + ATP = 7-cyano-7-deazaguanine + ADP + phosphate + H2O + H(+). It participates in purine metabolism; 7-cyano-7-deazaguanine biosynthesis. Its function is as follows. Catalyzes the ATP-dependent conversion of 7-carboxy-7-deazaguanine (CDG) to 7-cyano-7-deazaguanine (preQ(0)). This Salmonella paratyphi A (strain ATCC 9150 / SARB42) protein is 7-cyano-7-deazaguanine synthase.